Here is a 147-residue protein sequence, read N- to C-terminus: Small ribosomal subunit protein uS12 (147 aa).

The disordered stretch occupies residues 1–22 (MPTINQLVRKPRKSKIEKSDSP). D102 bears the 3-methylthioaspartic acid mark.

Belongs to the universal ribosomal protein uS12 family. In terms of assembly, part of the 30S ribosomal subunit. Contacts proteins S8 and S17. May interact with IF1 in the 30S initiation complex.

With S4 and S5 plays an important role in translational accuracy. Its function is as follows. Interacts with and stabilizes bases of the 16S rRNA that are involved in tRNA selection in the A site and with the mRNA backbone. Located at the interface of the 30S and 50S subunits, it traverses the body of the 30S subunit contacting proteins on the other side and probably holding the rRNA structure together. The combined cluster of proteins S8, S12 and S17 appears to hold together the shoulder and platform of the 30S subunit. The protein is Small ribosomal subunit protein uS12 of Streptococcus pyogenes serotype M12 (strain MGAS2096).